The chain runs to 157 residues: Arginine regulator (157 aa).

The protein belongs to the ArgR family.

Its subcellular location is the cytoplasm. It functions in the pathway amino-acid degradation; L-arginine degradation via ADI pathway. Regulates the transcription of the arc operon, involved in arginine catabolism. This Streptococcus pyogenes serotype M3 (strain SSI-1) protein is Arginine regulator (argR1).